We begin with the raw amino-acid sequence, 524 residues long: Putative ribose/galactose/methyl galactoside import ATP-binding protein 1 (524 aa).

ABC transporter domains follow at residues 35-271 and 281-520; these read LEVR…VGRE and VPIG…RIMD. Residue 67-74 coordinates ATP; the sequence is GENGAGKS.

Belongs to the ABC transporter superfamily. Carbohydrate importer 2 (CUT2) (TC 3.A.1.2) family.

Its subcellular location is the cell inner membrane. It catalyses the reaction D-ribose(out) + ATP + H2O = D-ribose(in) + ADP + phosphate + H(+). The enzyme catalyses D-galactose(out) + ATP + H2O = D-galactose(in) + ADP + phosphate + H(+). Functionally, part of an ABC transporter complex involved in carbohydrate import. Could be involved in ribose, galactose and/or methyl galactoside import. Responsible for energy coupling to the transport system. In Burkholderia cenocepacia (strain HI2424), this protein is Putative ribose/galactose/methyl galactoside import ATP-binding protein 1.